Consider the following 147-residue polypeptide: Ribosomal RNA large subunit methyltransferase H (147 aa).

S-adenosyl-L-methionine-binding positions include L66, G95, and 114 to 119 (LSELTF).

This sequence belongs to the RNA methyltransferase RlmH family. In terms of assembly, homodimer.

The protein localises to the cytoplasm. It carries out the reaction pseudouridine(1915) in 23S rRNA + S-adenosyl-L-methionine = N(3)-methylpseudouridine(1915) in 23S rRNA + S-adenosyl-L-homocysteine + H(+). Its function is as follows. Specifically methylates the pseudouridine at position 1915 (m3Psi1915) in 23S rRNA. The sequence is that of Ribosomal RNA large subunit methyltransferase H from Synechococcus sp. (strain RCC307).